The primary structure comprises 363 residues: Adenosine deaminase (363 aa).

H42 and H44 together coordinate Zn(2+). Residues 44 to 46 (HLD), D172, and G201 contribute to the a purine D-ribonucleoside site. The gating helix loop; regulates binding affinity for substrates and thus substrate selectivity stretch occupies residues 170 to 184 (IGDTGHEAANIKASA). H226 lines the Zn(2+) pocket. A purine D-ribonucleoside is bound by residues E229, H253, and D310. D310 is a Zn(2+) binding site.

Belongs to the metallo-dependent hydrolases superfamily. Adenosine and AMP deaminases family. Zn(2+) serves as cofactor.

The enzyme catalyses adenosine + H2O + H(+) = inosine + NH4(+). The catalysed reaction is S-methyl-5'-thioadenosine + H2O + H(+) = S-methyl-5'-thioinosine + NH4(+). The protein operates within purine metabolism; purine nucleoside salvage. Inhibited by coformycin and methylthiocoformycin (MT-coformycin). Its function is as follows. Catalyzes the hydrolytic deamination of adenosine to produce inosine. Unlike mammalian adenosine deaminases, also catalyzes the deamination of 5'-methylthioadenosine (MTA), a by-product of polyamine biosynthesis, to produce 5'-methylthioinosine (MTI). Plays an essential role in the purine salvage pathway which allows the parasite to use host cell purines for the synthesis of nucleic acids. This is Adenosine deaminase from Plasmodium vivax (strain Salvador I).